The sequence spans 810 residues: Phenylalanine--tRNA ligase beta subunit (810 aa).

Residues 40-153 (KLPDQKVIVG…EACEIGQPLA (114 aa)) form the tRNA-binding domain. In terms of domain architecture, B5 spans 399–480 (AAQKIVSLRP…RLYGYNNLEP (82 aa)). Mg(2+) contacts are provided by aspartate 458, aspartate 464, glutamate 467, and glutamate 468. Residues 714-808 (SKFPVVERDL…ARSELGAVIR (95 aa)) enclose the FDX-ACB domain.

It belongs to the phenylalanyl-tRNA synthetase beta subunit family. Type 1 subfamily. As to quaternary structure, tetramer of two alpha and two beta subunits. The cofactor is Mg(2+).

The protein localises to the cytoplasm. It carries out the reaction tRNA(Phe) + L-phenylalanine + ATP = L-phenylalanyl-tRNA(Phe) + AMP + diphosphate + H(+). This Chlorobaculum tepidum (strain ATCC 49652 / DSM 12025 / NBRC 103806 / TLS) (Chlorobium tepidum) protein is Phenylalanine--tRNA ligase beta subunit.